We begin with the raw amino-acid sequence, 146 residues long: Ribonuclease H (146 aa).

Positions 1 to 143 (MQKKITIYTD…CDELARQAIQ (143 aa)) constitute an RNase H type-1 domain. The Mg(2+) site is built by Asp10, Glu48, Asp70, and Asp135.

It belongs to the RNase H family. As to quaternary structure, monomer. Mg(2+) serves as cofactor.

The protein localises to the cytoplasm. The enzyme catalyses Endonucleolytic cleavage to 5'-phosphomonoester.. Functionally, endonuclease that specifically degrades the RNA of RNA-DNA hybrids. This Chlorobium luteolum (strain DSM 273 / BCRC 81028 / 2530) (Pelodictyon luteolum) protein is Ribonuclease H.